Consider the following 278-residue polypeptide: MAGNFWQSSHYLQWILDKERQKDLKFLSEEEYWKLQIFFTNVIQALGEHLKLRQQVIATATVYFKRFYARYSLKSIDPVLMAPTCVFLASKVEEFGVVSNTSLIAATTSVLKTRFSYASPKEFPYRMNHILECEFYLLELMDCCLIVYHPYRPLLQYVQDMGQEDVLLPLAWRIVNDTYRTDLCLLYPPFMIALACLHVACVVQQKDARQWFAELSVDMEKILEIIRVILKLYEQWKNFDERKEMATILSKMPKPKPPPNSEGEQGPNGSQNSSYSQS.

In terms of domain architecture, Cyclin N-terminal spans 41–139; it reads NVIQALGEHL…ILECEFYLLE (99 aa). Residues 247-278 are disordered; that stretch reads TILSKMPKPKPPPNSEGEQGPNGSQNSSYSQS. The span at 267 to 278 shows a compositional bias: polar residues; that stretch reads PNGSQNSSYSQS. Ser270 carries the phosphoserine modification.

It belongs to the cyclin family. Cyclin C subfamily. Component of the Mediator complex, which is composed of MED1, MED4, MED6, MED7, MED8, MED9, MED10, MED11, MED12, MED13, MED13L, MED14, MED15, MED16, MED17, MED18, MED19, MED20, MED21, MED22, MED23, MED24, MED25, MED26, MED27, MED29, MED30, MED31, CCNC, CDK8 and CDC2L6/CDK11. The MED12, MED13, CCNC and CDK8 subunits form a distinct module termed the CDK8 module. Mediator containing the CDK8 module is less active than Mediator lacking this module in supporting transcriptional activation. Individual preparations of the Mediator complex lacking one or more distinct subunits have been variously termed ARC, CRSP, DRIP, PC2, SMCC and TRAP. The cylin/CDK pair formed by CCNC/CDK8 also associates with the large subunit of RNA polymerase II.

The protein localises to the nucleus. In terms of biological role, component of the Mediator complex, a coactivator involved in regulated gene transcription of nearly all RNA polymerase II-dependent genes. Mediator functions as a bridge to convey information from gene-specific regulatory proteins to the basal RNA polymerase II transcription machinery. Mediator is recruited to promoters by direct interactions with regulatory proteins and serves as a scaffold for the assembly of a functional preinitiation complex with RNA polymerase II and the general transcription factors. Binds to and activates cyclin-dependent kinase CDK8 that phosphorylates the CTD (C-terminal domain) of the large subunit of RNA polymerase II (RNAp II), which may inhibit the formation of a transcription initiation complex. This chain is Cyclin-C (Ccnc), found in Rattus norvegicus (Rat).